Reading from the N-terminus, the 82-residue chain is Putative membrane protein insertion efficiency factor (82 aa).

This sequence belongs to the UPF0161 family.

It localises to the cell inner membrane. In terms of biological role, could be involved in insertion of integral membrane proteins into the membrane. The protein is Putative membrane protein insertion efficiency factor of Francisella tularensis subsp. novicida (strain U112).